The sequence spans 294 residues: Thymidylate synthase 1/2 (294 aa).

DUMP is bound by residues R29 and R154–R155. C174 acts as the Nucleophile in catalysis. DUMP-binding positions include R194–D197, N205, and H235–Y237. Residue D197 coordinates (6R)-5,10-methylene-5,6,7,8-tetrahydrofolate.

The protein belongs to the thymidylate synthase family.

The enzyme catalyses dUMP + (6R)-5,10-methylene-5,6,7,8-tetrahydrofolate = 7,8-dihydrofolate + dTMP. Its pathway is pyrimidine metabolism; dTTP biosynthesis. The polypeptide is Thymidylate synthase 1/2 (TS-1) (Encephalitozoon cuniculi (strain GB-M1) (Microsporidian parasite)).